Reading from the N-terminus, the 195-residue chain is Probable GTP-binding protein EngB (195 aa).

The EngB-type G domain occupies 22–194 (LKGEVAFVGR…LDLISTLLKE (173 aa)). GTP contacts are provided by residues 30 to 37 (GRSNVGKS), 56 to 60 (GKTRS), 74 to 77 (DLPG), 141 to 144 (TKMD), and 173 to 175 (TSS). Residues S37 and T58 each coordinate Mg(2+).

It belongs to the TRAFAC class TrmE-Era-EngA-EngB-Septin-like GTPase superfamily. EngB GTPase family. Mg(2+) is required as a cofactor.

Its function is as follows. Necessary for normal cell division and for the maintenance of normal septation. This is Probable GTP-binding protein EngB from Thermotoga sp. (strain RQ2).